Consider the following 276-residue polypeptide: Ribosomal RNA small subunit methyltransferase J (276 aa).

Residues 135-136 (ER) and aspartate 191 each bind S-adenosyl-L-methionine.

This sequence belongs to the methyltransferase superfamily. RsmJ family.

The protein localises to the cytoplasm. It catalyses the reaction guanosine(1516) in 16S rRNA + S-adenosyl-L-methionine = N(2)-methylguanosine(1516) in 16S rRNA + S-adenosyl-L-homocysteine + H(+). Specifically methylates the guanosine in position 1516 of 16S rRNA. This is Ribosomal RNA small subunit methyltransferase J from Hydrogenovibrio crunogenus (strain DSM 25203 / XCL-2) (Thiomicrospira crunogena).